We begin with the raw amino-acid sequence, 292 residues long: Formamidopyrimidine-DNA glycosylase (292 aa).

Catalysis depends on proline 2, which acts as the Schiff-base intermediate with DNA. The active-site Proton donor is glutamate 3. The active-site Proton donor; for beta-elimination activity is lysine 61. Positions 96, 115, and 161 each coordinate DNA. Residues 247 to 281 (SAYGQEDRPCPRCGTAIRREKFMNRSSFSCPKCQP) form an FPG-type zinc finger. Arginine 271 acts as the Proton donor; for delta-elimination activity in catalysis.

The protein belongs to the FPG family. Monomer. It depends on Zn(2+) as a cofactor.

The catalysed reaction is Hydrolysis of DNA containing ring-opened 7-methylguanine residues, releasing 2,6-diamino-4-hydroxy-5-(N-methyl)formamidopyrimidine.. The enzyme catalyses 2'-deoxyribonucleotide-(2'-deoxyribose 5'-phosphate)-2'-deoxyribonucleotide-DNA = a 3'-end 2'-deoxyribonucleotide-(2,3-dehydro-2,3-deoxyribose 5'-phosphate)-DNA + a 5'-end 5'-phospho-2'-deoxyribonucleoside-DNA + H(+). In terms of biological role, involved in base excision repair of DNA damaged by oxidation or by mutagenic agents. Acts as a DNA glycosylase that recognizes and removes damaged bases. Has a preference for oxidized purines, such as 7,8-dihydro-8-oxoguanine (8-oxoG). Has AP (apurinic/apyrimidinic) lyase activity and introduces nicks in the DNA strand. Cleaves the DNA backbone by beta-delta elimination to generate a single-strand break at the site of the removed base with both 3'- and 5'-phosphates. This is Formamidopyrimidine-DNA glycosylase from Rhodococcus jostii (strain RHA1).